We begin with the raw amino-acid sequence, 103 residues long: MKNPLLRPWLTEKSTGLTEKKGQYVFKVKLDADKTDIKKAIEEKFGVVVKSVRTVNCLGKSKRQFTRKGVLQGKKSDWKKAIVTLAKDQSIDYYSGSTQKGEG.

It belongs to the universal ribosomal protein uL23 family. In terms of assembly, part of the 50S ribosomal subunit. Contacts protein L29, and trigger factor when it is bound to the ribosome.

Its function is as follows. One of the early assembly proteins it binds 23S rRNA. One of the proteins that surrounds the polypeptide exit tunnel on the outside of the ribosome. Forms the main docking site for trigger factor binding to the ribosome. In Chlorobium phaeobacteroides (strain DSM 266 / SMG 266 / 2430), this protein is Large ribosomal subunit protein uL23.